Consider the following 600-residue polypeptide: tRNA(Ile)-lysidine synthase, chloroplastic (600 aa).

Residue 35 to 40 (SGGQDS) participates in ATP binding.

It belongs to the tRNA(Ile)-lysidine synthase family.

The protein resides in the plastid. Its subcellular location is the chloroplast. The catalysed reaction is cytidine(34) in tRNA(Ile2) + L-lysine + ATP = lysidine(34) in tRNA(Ile2) + AMP + diphosphate + H(+). In terms of biological role, ligates lysine onto the cytidine present at position 34 of the AUA codon-specific tRNA(Ile) that contains the anticodon CAU, in an ATP-dependent manner. Cytidine is converted to lysidine, thus changing the amino acid specificity of the tRNA from methionine to isoleucine. This Tupiella akineta (Green alga) protein is tRNA(Ile)-lysidine synthase, chloroplastic.